A 301-amino-acid polypeptide reads, in one-letter code: NADH-cytochrome b5 reductase 2 (301 aa).

Residues 14-30 (FLVPFAGATALSIGLAL) traverse the membrane as a helical segment. An FAD-binding FR-type domain is found at 51-155 (NEWVDLKLSK…KGPIVKWKWE (105 aa)). FAD is bound at residue 158-193 (QFKSIALIGGGTGITPLYQLLHQITSNPKDNTKVNL).

Belongs to the flavoprotein pyridine nucleotide cytochrome reductase family. Requires FAD as cofactor.

Its subcellular location is the mitochondrion outer membrane. It carries out the reaction 2 Fe(III)-[cytochrome b5] + NADH = 2 Fe(II)-[cytochrome b5] + NAD(+) + H(+). In terms of biological role, may mediate the reduction of outer membrane cytochrome b5. The chain is NADH-cytochrome b5 reductase 2 (MCR1) from Candida albicans (strain SC5314 / ATCC MYA-2876) (Yeast).